The sequence spans 131 residues: Protein Turandot M (131 aa).

Residues 1–23 form the signal peptide; it reads MNPAIYLSCLVVFSLLLLGKVNA.

This sequence belongs to the Turandot family.

It localises to the secreted. Its function is as follows. A humoral factor that may play a role in stress tolerance. Requires Mekk1 expression in the fat body to regulate response to septic injury and consequent immune response. The sequence is that of Protein Turandot M from Drosophila erecta (Fruit fly).